The primary structure comprises 344 residues: Anthranilate phosphoribosyltransferase (344 aa).

5-phospho-alpha-D-ribose 1-diphosphate contacts are provided by residues G84, G87–D88, S92, N94–T97, K112–G120, and S124. An anthranilate-binding site is contributed by G84. Position 96 (S96) interacts with Mg(2+). Residue N115 coordinates anthranilate. Residue R170 participates in anthranilate binding. Residues D229 and E230 each contribute to the Mg(2+) site.

Belongs to the anthranilate phosphoribosyltransferase family. As to quaternary structure, homodimer. It depends on Mg(2+) as a cofactor.

It catalyses the reaction N-(5-phospho-beta-D-ribosyl)anthranilate + diphosphate = 5-phospho-alpha-D-ribose 1-diphosphate + anthranilate. It functions in the pathway amino-acid biosynthesis; L-tryptophan biosynthesis; L-tryptophan from chorismate: step 2/5. In terms of biological role, catalyzes the transfer of the phosphoribosyl group of 5-phosphorylribose-1-pyrophosphate (PRPP) to anthranilate to yield N-(5'-phosphoribosyl)-anthranilate (PRA). The sequence is that of Anthranilate phosphoribosyltransferase from Synechococcus sp. (strain RCC307).